Consider the following 93-residue polypeptide: Putative ribosomal protein eL43-like (93 aa).

The C4-type zinc-finger motif lies at 40–61 (CSFCGKTKMKRRAVKIRHCNSC).

Belongs to the eukaryotic ribosomal protein eL43 family.

This chain is Putative ribosomal protein eL43-like (RPL37AP8), found in Homo sapiens (Human).